The following is a 196-amino-acid chain: APGW-amide-related neuropeptide (196 aa).

A signal peptide spans 1–22 (METLNIFLVIFSLLGTIIIASS). The propeptide occupies 23-48 (SDESSERKKRDLDTIDDTNNDFLTAD). The residue at position 54 (Trp54) is a Tryptophan amide. Positions 58 to 68 (SFDDDILNNLD) are excised as a propeptide. Trp74 bears the Tryptophan amide mark. A propeptide spanning residues 78-88 (SDMLFDSEEIE) is cleaved from the precursor. Position 94 is a tryptophan amide (Trp94). A propeptide spanning residues 98–105 (SSSLYDDE) is cleaved from the precursor. Residue Trp111 is modified to Tryptophan amide. A propeptide spanning residues 115–129 (SSALLDDLSLYNSIV) is cleaved from the precursor. Position 135 is a tryptophan amide (Trp135). Residues 139 to 146 (SDTFKVDI) constitute a propeptide that is removed on maturation. Tryptophan amide occurs at positions 151 and 158. A propeptide spanning residues 162–196 (SGPNMCMDFQDEILQLYKLLNEAEKLHSECEALNI) is cleaved from the precursor.

As to expression, expressed in cerebral, pedal and visceral ganglia. TPGW-amide is found in pedal and cerebral ganglia and in shell adductor muscle (at protein level). RPGW-amide and KPGW-amide are found in pedal retractor muscle, ABRM and shell adductor muscle (at protein level).

RPGW-amide, KPGW-amide and TPGW-amide tetrapeptides are involved in control of muscle contraction and may function as neurotransmitters. These peptides increase tension of the pedal retractor muscle and, in conjunction with FMRF-amide, increase peak tension of the anterior byssus retractor muscle (ABRM). The chain is APGW-amide-related neuropeptide from Mytilus edulis (Blue mussel).